We begin with the raw amino-acid sequence, 2070 residues long: Multiple PDZ domain protein (2070 aa).

The L27 domain maps to 1–63; sequence MLEAIDKNRA…SVQQLKDQVN (63 aa). The PDZ 1 domain maps to 137–224; that stretch reads VFELLKPPSG…TVQLVIARGS (88 aa). S230 carries the phosphoserine modification. 2 consecutive PDZ domains span residues 257–337 and 377–463; these read TIEL…ARGA and DVEL…MRRG. S483 is subject to Phosphoserine. 2 consecutive PDZ domains span residues 553-634 and 700-786; these read VAHV…CRRT and HIEL…VAKP. Residues S790 and S1078 each carry the phosphoserine modification. Residues 1008-1089 enclose the PDZ 6 domain; that stretch reads TINIAKGNSS…IGPDIKITYV (82 aa). The segment at 1121-1140 is disordered; the sequence is DIPELPEREEGEGEESELQN. One can recognise a PDZ 7 domain in the interval 1151 to 1243; it reads RVELWREPSK…PVVFMVQSII (93 aa). R1170 carries the post-translational modification Omega-N-methylarginine. The interval 1278–1324 is disordered; it reads ADKAPSQSESEPEKAPLCSVPPPPPSAFAEMGSDHTQSSASKISQDV. Polar residues predominate over residues 1311–1321; it reads DHTQSSASKIS. PDZ domains are found at residues 1350–1433 and 1483–1564; these read MIEL…IRNK and HLEL…HAEN. The disordered stretch occupies residues 1567–1612; that stretch reads SQAVPSAAGAASGEKKNSSQSLMVPQSGSPEPESIRNTSRSSTPAI. Residues 1584 to 1610 show a composition bias toward polar residues; the sequence is SSQSLMVPQSGSPEPESIRNTSRSSTP. 2 consecutive PDZ domains span residues 1629-1712 and 1725-1807; these read TIEI…YRDE and TIEL…GRIK. S1818 and S1824 each carry phosphoserine. 2 consecutive PDZ domains span residues 1862-1948 and 1987-2070; these read TVEM…VAGG and SITL…MVLS.

As to quaternary structure, interacts with CLDN5, DLG4, GRIN1, F11R/JAM, CLDN1, NG2, CRB1, MPP4 and PALS1. Interacts with HTR2A, HTR2B, HTR2C, PLEKHA1/TAPP1, PLEKHA2/TAPP2, CXADR, SYNGAP1, CAMK2A and CAMK2B. Interacts with FAT4 (via cytoplasmic domain). Interacts with DLL1. In terms of assembly, (Microbial infection) Interacts with human adenovirus type 9 E4-ORF1 protein. (Microbial infection) Interacts with human papillomavirus 18/HPV18 protein E6. In terms of tissue distribution, expressed in heart, brain, placenta, liver, skeletal muscle, kidney and pancreas.

It is found in the cell membrane. The protein localises to the apical cell membrane. The protein resides in the postsynaptic density. Its subcellular location is the cell projection. It localises to the dendrite. It is found in the cell junction. The protein localises to the tight junction. The protein resides in the synapse. Its subcellular location is the synaptosome. In terms of biological role, member of the NMDAR signaling complex that may play a role in control of AMPAR potentiation and synaptic plasticity in excitatory synapses. Promotes clustering of HT2RC at the cell surface. This is Multiple PDZ domain protein (MPDZ) from Homo sapiens (Human).